The following is an 88-amino-acid chain: Small ribosomal subunit protein bS16 (88 aa).

Belongs to the bacterial ribosomal protein bS16 family.

This chain is Small ribosomal subunit protein bS16, found in Anaeromyxobacter sp. (strain Fw109-5).